A 448-amino-acid polypeptide reads, in one-letter code: Exoglucanase GH7B (448 aa).

The first 17 residues, 1–17 (MSLAVVFLLGFLAVSHG), serve as a signal peptide directing secretion. The residue at position 18 (Gln18) is a Pyrrolidone carboxylic acid. 2 disulfides stabilise this stretch: Cys62–Cys83 and Cys73–Cys79. Residues Tyr97, 119–120 (DI), and Lys197 each bind substrate. Disulfide bonds link Cys154–Cys415, Cys188–Cys226, Cys192–Cys225, Cys246–Cys271, Cys254–Cys259, and Cys276–Cys350. The Nucleophile role is filled by Glu228. Substrate contacts are provided by residues 230-233 (DIWE) and His244. The Proton donor/acceptor role is filled by Glu233. Residues Arg266 and Asp274 each coordinate substrate. 2 residues coordinate substrate: Trp396 and Arg412.

Belongs to the glycosyl hydrolase 7 (cellulase C) family. In terms of assembly, monomer. As to expression, highly expressed in the hepatopancreas (at protein level). Little or no expression detected in the hindgut or the rest of the body (at protein level).

Its subcellular location is the secreted. It catalyses the reaction Hydrolysis of (1-&gt;4)-beta-D-glucosidic linkages in cellulose and cellotetraose, releasing cellobiose from the non-reducing ends of the chains.. Its function is as follows. Exocellobiohydrolase (CBH) that catalyzes the hydrolysis of 1,4-beta-D-glucosidic bonds in cellulose to release the disaccharide cellobiose. The degradation of cellulose involves an interplay between different cellulolytic enzymes. Hydrolysis starts with endoglucanases (EGs), which cut internal beta-1,4-glucosidic bonds in cellulose to reduce the polymerization degree of the substrate and create new chain ends for exocellobiohydrolases (CBHs). The CBHs release the disaccharide cellobiose from the non-reducing end of the cellulose polymer chain. Finally, beta-1,4-glucosidases hydrolyze the cellobiose and other short cello-oligosaccharides into glucose units. This chain is Exoglucanase GH7B, found in Limnoria quadripunctata (Gribble).